We begin with the raw amino-acid sequence, 414 residues long: MKAEILAVGTELLLGNIVNTNAQYISKRLADLGIEVYNQSVVGDNAERLREAYELAFKRADLVITTGGLGPTKDDLTKEVAFEYLGKEAKLHEESLRRIEDYFKKIDRPMVDSNKKQACFPEDAIIMPNNNGTAPGCIIEENKKILAVLPGPPREMKAMFEESLVPYLRKFQENVLHSKTLRILGVGESRVAEIVDDILENSTNPTVAPYAKDSEVTLRITAKAKTIEDAEKLIEPVEQEIRDRLGLSVYADGEVTLEEVLGKMLIDNNITIATAESCTGGLLAGRLVNYPGISSVFKEGMITYSNEAKMKRIKVKKDTLQKYGAVSSQTAAEMAEGVAKVTGSDIGISTTGIAGPDGGTKEKPVGLVYVGICIKGDVKTKELHLVGDRQRVRQHTVIRALEWLRRELIRKGIK.

It belongs to the CinA family.

The protein is Putative competence-damage inducible protein of Clostridium novyi (strain NT).